Reading from the N-terminus, the 143-residue chain is AP-4 complex subunit sigma (143 aa).

Belongs to the adaptor complexes small subunit family. In terms of assembly, adaptor protein complex 4 (AP-4) is a heterotetramer composed of two large adaptins (epsilon-type subunit and beta-type subunit), a medium adaptin (mu-type subunit) and a small adaptin (sigma-type subunit). Interacts with EHD2.

The protein localises to the golgi apparatus. It is found in the trans-Golgi network. It localises to the membrane. Its subcellular location is the coated pit. Subunit of novel type of clathrin- or non-clathrin-associated protein coat involved in targeting proteins from the trans-Golgi network (TGN) to the endosomal-lysosomal system. In Arabidopsis thaliana (Mouse-ear cress), this protein is AP-4 complex subunit sigma.